The primary structure comprises 1792 residues: Brefeldin A-inhibited guanine nucleotide-exchange protein 2 (1792 aa).

The residue at position 1 (Met-1) is an N-acetylmethionine. Positions 2–224 are DCB; DCB:DCB domain and DCB:HUS domain interaction; it reads QESQTKSMFV…KPQSPVIQAT (223 aa). The segment at 207–294 is disordered; it reads ELEKPMQSKP…SRGTDSGAQE (88 aa). Phosphoserine occurs at positions 214, 218, and 227. Positions 214–225 are enriched in polar residues; the sequence is SKPQSPVIQATA. Positions 233-243 are enriched in polar residues; that stretch reads LKQSQAQSKPT. A Phosphothreonine modification is found at Thr-244. Phosphoserine is present on residues Ser-355 and Ser-356. Residues 515–535 are HUS; DCB:HUS domain interaction; the sequence is ADAQCVVDIYVNYDCDLNAAN. The residue at position 621 (Ser-621) is a Phosphoserine. Thr-623 carries the post-translational modification Phosphothreonine. Ser-624 carries the phosphoserine modification. Position 633 is a phosphothreonine (Thr-633). An SEC7 domain is found at 661–792; that stretch reads FNKKPKRGIQ…IIMLTTDLHS (132 aa). 8 positions are modified to phosphoserine: Ser-707, Ser-1518, Ser-1520, Ser-1521, Ser-1532, Ser-1535, Ser-1541, and Ser-1789.

As to quaternary structure, homodimer. Interacts with ARFGEF1/BIG1; both proteins are probably part of the same or very similar macromolecular complexes. Interacts with PRKAR1A, PRKAR2A, PRKAR1B, PRKAR2B, PPP1CC, PDE3A, TNFRSF1A, MYCBP and EXOC7. Interacts with GABRB1, GABRB2 and GABRB3. Post-translationally, in vitro phosphorylated by PKA reducing its GEF activity and dephosphorylated by phosphatase PP1.

The protein localises to the cytoplasm. Its subcellular location is the membrane. It is found in the golgi apparatus. The protein resides in the perinuclear region. It localises to the trans-Golgi network. The protein localises to the endosome. Its subcellular location is the cytoskeleton. It is found in the microtubule organizing center. The protein resides in the centrosome. It localises to the cell projection. The protein localises to the dendrite. Its subcellular location is the cytoplasmic vesicle. It is found in the synapse. Its activity is regulated as follows. Inhibited by brefeldin A. Promotes guanine-nucleotide exchange on ARF1 and ARF3 and to a lower extent on ARF5 and ARF6. Promotes the activation of ARF1/ARF5/ARF6 through replacement of GDP with GTP. Involved in the regulation of Golgi vesicular transport. Required for the integrity of the endosomal compartment. Involved in trafficking from the trans-Golgi network (TGN) to endosomes and is required for membrane association of the AP-1 complex and GGA1. Seems to be involved in recycling of the transferrin receptor from recycling endosomes to the plasma membrane. Probably is involved in the exit of GABA(A) receptors from the endoplasmic reticulum. Involved in constitutive release of tumor necrosis factor receptor 1 via exosome-like vesicles; the function seems to involve PKA and specifically PRKAR2B. Proposed to act as A kinase-anchoring protein (AKAP) and may mediate crosstalk between Arf and PKA pathways. The sequence is that of Brefeldin A-inhibited guanine nucleotide-exchange protein 2 (Arfgef2) from Mus musculus (Mouse).